Consider the following 200-residue polypeptide: ADP-ribose 1''-phosphate phosphatase (200 aa).

Positions 1 to 200 (MDPPSVRSKI…EVTVVRPHGG (200 aa)) constitute a Macro domain. Substrate-binding positions include 15–17 (GDL), 29–31 (ACN), 36–41 (WGKGIA), and 169–175 (FNAGLFG).

The protein belongs to the POA1 family.

The enzyme catalyses ADP-alpha-D-ribose 1''-phosphate + H2O = ADP-D-ribose + phosphate. In terms of biological role, highly specific phosphatase involved in the metabolism of ADP-ribose 1''-phosphate (Appr1p) which is produced as a consequence of tRNA splicing. The chain is ADP-ribose 1''-phosphate phosphatase (poa1) from Aspergillus fumigatus (strain ATCC MYA-4609 / CBS 101355 / FGSC A1100 / Af293) (Neosartorya fumigata).